The chain runs to 427 residues: Enolase (427 aa).

(2R)-2-phosphoglycerate is bound at residue Gln-163. Glu-205 serves as the catalytic Proton donor. The Mg(2+) site is built by Asp-242, Glu-285, and Asp-312. Residues Lys-337, Arg-366, Ser-367, and Lys-388 each coordinate (2R)-2-phosphoglycerate. Residue Lys-337 is the Proton acceptor of the active site.

It belongs to the enolase family. Mg(2+) serves as cofactor.

The protein resides in the cytoplasm. Its subcellular location is the secreted. It is found in the cell surface. The enzyme catalyses (2R)-2-phosphoglycerate = phosphoenolpyruvate + H2O. The protein operates within carbohydrate degradation; glycolysis; pyruvate from D-glyceraldehyde 3-phosphate: step 4/5. Catalyzes the reversible conversion of 2-phosphoglycerate (2-PG) into phosphoenolpyruvate (PEP). It is essential for the degradation of carbohydrates via glycolysis. The sequence is that of Enolase from Paraburkholderia phytofirmans (strain DSM 17436 / LMG 22146 / PsJN) (Burkholderia phytofirmans).